The chain runs to 175 residues: MYKNIIKLISGDITKIPEVEAIVNAANSSLEMGGGVCGAIFKAAGSELAQECKEIGGCNTGEAVITKGYNLPNKYIIHTVGPRYSTGENREAERLASAYYESLKLANEKGIRRIAFPSISTGIYRFPVDEGAKIALTTAIKFLDKNPSSFDLILWVLDEKTYIVYKEKYKKLLEI.

The Macro domain occupies methionine 1–leucine 173.

Belongs to the MacroD-type family.

This is an uncharacterized protein from Fusobacterium nucleatum subsp. nucleatum (strain ATCC 25586 / DSM 15643 / BCRC 10681 / CIP 101130 / JCM 8532 / KCTC 2640 / LMG 13131 / VPI 4355).